Consider the following 360-residue polypeptide: Aminomethyltransferase (360 aa).

It belongs to the GcvT family. In terms of assembly, the glycine cleavage system is composed of four proteins: P, T, L and H.

The catalysed reaction is N(6)-[(R)-S(8)-aminomethyldihydrolipoyl]-L-lysyl-[protein] + (6S)-5,6,7,8-tetrahydrofolate = N(6)-[(R)-dihydrolipoyl]-L-lysyl-[protein] + (6R)-5,10-methylene-5,6,7,8-tetrahydrofolate + NH4(+). In terms of biological role, the glycine cleavage system catalyzes the degradation of glycine. This chain is Aminomethyltransferase, found in Pseudomonas putida (strain ATCC 47054 / DSM 6125 / CFBP 8728 / NCIMB 11950 / KT2440).